Reading from the N-terminus, the 88-residue chain is Small ribosomal subunit protein uS15 (88 aa).

Belongs to the universal ribosomal protein uS15 family. In terms of assembly, part of the 30S ribosomal subunit. Forms a bridge to the 50S subunit in the 70S ribosome, contacting the 23S rRNA.

Its function is as follows. One of the primary rRNA binding proteins, it binds directly to 16S rRNA where it helps nucleate assembly of the platform of the 30S subunit by binding and bridging several RNA helices of the 16S rRNA. Forms an intersubunit bridge (bridge B4) with the 23S rRNA of the 50S subunit in the ribosome. This is Small ribosomal subunit protein uS15 from Mycoplasma mycoides subsp. mycoides SC (strain CCUG 32753 / NCTC 10114 / PG1).